Here is a 610-residue protein sequence, read N- to C-terminus: Modifier of mdg4 (610 aa).

A self-association region spans residues 1–160; the sequence is MADDEQFSLC…QQPRASARYK (160 aa). Positions 1–308 are interaction with Chi; the sequence is MADDEQFSLC…EEAEYIDLPM (308 aa). The BTB domain occupies 32–98; it reads VDVSLAAEGQ…MYCGEVNVKQ (67 aa). 4 disordered regions span residues 115–156, 219–259, 311–339, and 386–432; these read GLTD…PRAS, VSTN…DSTT, PTKS…DDTY, and ESSF…PKPK. Over residues 122–135 the composition is skewed to pro residues; the sequence is APQPPQESSPPPAA. The segment covering 136–156 has biased composition (low complexity); sequence PHVQQQQIPAQRVQRQQPRAS. The segment covering 222–238 has biased composition (polar residues); that stretch reads NKRSAQRSSLTPASSSA. Residue Ser-230 is modified to Phosphoserine. Residues 312–325 are compositionally biased toward basic and acidic residues; it reads TKSEPDYSEDHGDA. The span at 386 to 400 shows a compositional bias: polar residues; sequence ESSFVDTSGDQGNTE. Positions 401–410 are enriched in low complexity; sequence AQAATSASAT. The segment covering 422-432 has biased composition (basic and acidic residues); sequence TKVEDQTPKPK. The FLYWCH-type zinc finger occupies 452 to 512; the sequence is YASTTKGGVK…VFPYEGEHVH (61 aa). Residues 551–610 are interaction with su(Hw); it reads LEEADDKEDEDFEEFEIQEIDEIELDEPEKTPAKEEEVDPNDFREKIKRRLQKALQNKKK. Over residues 567–577 the composition is skewed to acidic residues; the sequence is IQEIDEIELDE. The interval 567–595 is disordered; it reads IQEIDEIELDEPEKTPAKEEEVDPNDFRE. The segment covering 578-595 has biased composition (basic and acidic residues); the sequence is PEKTPAKEEEVDPNDFRE.

Can self-associate. Interacts with Chi. Interacts with Top2. Isoform mod2.2: Component of the gypsy chromatin insulator complex, composed of Cp190, mod(mdg4) and su(Hw). The gypsy chromatin insulator complex interacts with Topors via mod(mdg4) and su(Hw). Isoform mod2.2 interacts with Trl/GAGA and interaction with this protein may bypass the repressive effects of the su(Hw) insulator.

It localises to the nucleus. The protein localises to the chromosome. Component of the gypsy chromatin insulator complex which is required for the function of the gypsy chromatin insulator and other endogenous chromatin insulators. Chromatin insulators are regulatory elements which establish independent domains of transcriptional activity within eukaryotic genomes. Insulators have two defining properties; they can block the communication between an enhancer and a promoter when placed between them and can also buffer transgenes from position effect variegation (PEV). Insulators are proposed to structure the chromatin fiber into independent domains of differing transcriptional potential by promoting the formation of distinct chromatin loops. This chromatin looping may involve the formation of insulator bodies, where homotypic interactions between individual subunits of the insulator complex could promote the clustering of widely spaced insulators at the nuclear periphery. Within the gypsy insulator complex, this protein may control the nature of the repressive effect of su(Hw): in the absence of mod(mdg4) protein, su(Hw) exerts a bidirectional silencing effect, whereas in the presence of mod(mdg4), the silencing effect is unidirectional. Isoform H is specifically required to maintain the pairing of achiasmate homologs in male meiosis I which is mediated by the rDNA repeats on the achiasmate X-Y bivalents. Isoform H also plays a role in apoptotic regulatory pathways. In Drosophila melanogaster (Fruit fly), this protein is Modifier of mdg4.